The chain runs to 154 residues: MTEVEERINAWNDGFEELLSYIPAKLYYREHTANQWKQKKSTLEEKKERRKMKFSLDGLVNDADDDSQKSSKWEQSSTMSDDTDVSDRHAESMSQIRGKLASKIQDLREKRKAGDLNQKRQNKRPVENEKDSQKGSGKSKVQKKKHKASPRAGF.

A disordered region spans residues 36-154 (WKQKKSTLEE…KHKASPRAGF (119 aa)). Residue Ser-80 is modified to Phosphoserine. The residue at position 83 (Thr-83) is a Phosphothreonine. Residues 105 to 133 (QDLREKRKAGDLNQKRQNKRPVENEKDSQ) are compositionally biased toward basic and acidic residues. Over residues 140–154 (KVQKKKHKASPRAGF) the composition is skewed to basic residues.

The protein belongs to the SURF6 family.

It is found in the nucleus. It localises to the nucleolus. Involved in ribosome biogenesis and cell polarity. Required for the synthesis of both 40S and 60S ribosomal subunits and may also play some direct role in correct positioning of the mitotic spindle during mitosis. This chain is Ribosomal RNA-processing protein 14-N (rrp14n), found in Schizosaccharomyces pombe (strain 972 / ATCC 24843) (Fission yeast).